Consider the following 264-residue polypeptide: MIYGILSHVPKIFFKPAYDLYERYLLEKVKAGVLPKHVAIIMDGNRRWAKKREKPPWYGHLFGSKKLEEILEWCHELGIRILTVYAFSTENFKRSKEEVERLMQLFEQKFRELVTDKRVHEYGVRVNVIGRKELLPKSVRDAAEEAERATRKYNNYVLNVAIAYGGRSEIVDAVKDIVRDVMDGKLRVEDIDEELLKKYLYVPNMPDPDIVIRTGGEVRISNFLLYQIAYSELFFVDVYFPEFRKIDFLRIIREFQKRERRFGR.

Aspartate 43 is an active-site residue. Aspartate 43 is a Mg(2+) binding site. Substrate contacts are provided by residues 44–47 (GNRR), tryptophan 48, histidine 60, and 88–90 (STE). The active-site Proton acceptor is the asparagine 91. Substrate-binding positions include phenylalanine 92, arginine 94, arginine 213, and 219 to 221 (RIS). Mg(2+) is bound at residue glutamate 232.

This sequence belongs to the UPP synthase family. As to quaternary structure, homodimer. The cofactor is Mg(2+).

It carries out the reaction geranylgeranyl diphosphate + 7 isopentenyl diphosphate = tri-trans,hepta-cis-undecaprenyl diphosphate + 7 diphosphate. In terms of biological role, catalyzes the sequential condensation of isopentenyl diphosphate (IPP) with geranylgeranyl diphosphate (GGPP) to yield (2Z,6Z,10Z,14Z,18Z,22Z,26Z,30E,34E,38E)-undecaprenyl diphosphate (tritrans,heptacis-UPP). It is probably the precursor of glycosyl carrier lipids. In Pyrococcus abyssi (strain GE5 / Orsay), this protein is Tritrans,polycis-undecaprenyl-diphosphate synthase (geranylgeranyl-diphosphate specific).